A 545-amino-acid polypeptide reads, in one-letter code: Glucose-6-phosphate isomerase (545 aa).

Glu351 serves as the catalytic Proton donor. Catalysis depends on residues His382 and Lys510.

Belongs to the GPI family.

It localises to the cytoplasm. It catalyses the reaction alpha-D-glucose 6-phosphate = beta-D-fructose 6-phosphate. It functions in the pathway carbohydrate biosynthesis; gluconeogenesis. It participates in carbohydrate degradation; glycolysis; D-glyceraldehyde 3-phosphate and glycerone phosphate from D-glucose: step 2/4. Its function is as follows. Catalyzes the reversible isomerization of glucose-6-phosphate to fructose-6-phosphate. In Shewanella baltica (strain OS223), this protein is Glucose-6-phosphate isomerase.